The chain runs to 123 residues: Large ribosomal subunit protein bL12 (123 aa).

This sequence belongs to the bacterial ribosomal protein bL12 family. As to quaternary structure, homodimer. Part of the ribosomal stalk of the 50S ribosomal subunit. Forms a multimeric L10(L12)X complex, where L10 forms an elongated spine to which 2 to 4 L12 dimers bind in a sequential fashion. Binds GTP-bound translation factors.

Functionally, forms part of the ribosomal stalk which helps the ribosome interact with GTP-bound translation factors. Is thus essential for accurate translation. The polypeptide is Large ribosomal subunit protein bL12 (Photorhabdus laumondii subsp. laumondii (strain DSM 15139 / CIP 105565 / TT01) (Photorhabdus luminescens subsp. laumondii)).